Here is a 29-residue protein sequence, read N- to C-terminus: Galanin (29 aa).

An Alanine amide modification is found at Ala29.

It belongs to the galanin family.

The protein localises to the secreted. In terms of biological role, contracts smooth muscle of the gastrointestinal and genitourinary tract, regulates growth hormone release, modulates insulin release, and may be involved in the control of adrenal secretion. This chain is Galanin (gal), found in Pelophylax ridibundus (Marsh frog).